Here is a 250-residue protein sequence, read N- to C-terminus: 2,3-bisphosphoglycerate-dependent phosphoglycerate mutase (250 aa).

Substrate contacts are provided by residues 8–15 (RHGESQWN), 21–22 (TG), arginine 60, 87–90 (ERHY), lysine 98, 114–115 (RR), and 183–184 (GN). The active-site Tele-phosphohistidine intermediate is histidine 9. Glutamate 87 (proton donor/acceptor) is an active-site residue.

The protein belongs to the phosphoglycerate mutase family. BPG-dependent PGAM subfamily. In terms of assembly, homodimer.

It catalyses the reaction (2R)-2-phosphoglycerate = (2R)-3-phosphoglycerate. It participates in carbohydrate degradation; glycolysis; pyruvate from D-glyceraldehyde 3-phosphate: step 3/5. Catalyzes the interconversion of 2-phosphoglycerate and 3-phosphoglycerate. The protein is 2,3-bisphosphoglycerate-dependent phosphoglycerate mutase of Bordetella pertussis (strain Tohama I / ATCC BAA-589 / NCTC 13251).